Here is a 342-residue protein sequence, read N- to C-terminus: N-acetyl-gamma-glutamyl-phosphate reductase (342 aa).

Cys147 is an active-site residue.

Belongs to the NAGSA dehydrogenase family. Type 1 subfamily.

It is found in the cytoplasm. It carries out the reaction N-acetyl-L-glutamate 5-semialdehyde + phosphate + NADP(+) = N-acetyl-L-glutamyl 5-phosphate + NADPH + H(+). It functions in the pathway amino-acid biosynthesis; L-arginine biosynthesis; N(2)-acetyl-L-ornithine from L-glutamate: step 3/4. Its function is as follows. Catalyzes the NADPH-dependent reduction of N-acetyl-5-glutamyl phosphate to yield N-acetyl-L-glutamate 5-semialdehyde. The protein is N-acetyl-gamma-glutamyl-phosphate reductase of Campylobacter jejuni subsp. doylei (strain ATCC BAA-1458 / RM4099 / 269.97).